The sequence spans 353 residues: H(2)-forming methylenetetrahydromethanopterin dehydrogenase-related protein MJ1338 (353 aa).

The protein belongs to the HMD family.

This chain is H(2)-forming methylenetetrahydromethanopterin dehydrogenase-related protein MJ1338, found in Methanocaldococcus jannaschii (strain ATCC 43067 / DSM 2661 / JAL-1 / JCM 10045 / NBRC 100440) (Methanococcus jannaschii).